The sequence spans 299 residues: Pantothenate synthetase (299 aa).

Position 41–48 (M41–H48) interacts with ATP. H48 acts as the Proton donor in catalysis. Q72 is a (R)-pantoate binding site. A beta-alanine-binding site is contributed by Q72. Position 158-161 (G158–D161) interacts with ATP. Q164 is a binding site for (R)-pantoate. ATP is bound by residues V187 and M195–R198.

Belongs to the pantothenate synthetase family. As to quaternary structure, homodimer.

It localises to the cytoplasm. It catalyses the reaction (R)-pantoate + beta-alanine + ATP = (R)-pantothenate + AMP + diphosphate + H(+). It functions in the pathway cofactor biosynthesis; (R)-pantothenate biosynthesis; (R)-pantothenate from (R)-pantoate and beta-alanine: step 1/1. In terms of biological role, catalyzes the condensation of pantoate with beta-alanine in an ATP-dependent reaction via a pantoyl-adenylate intermediate. The sequence is that of Pantothenate synthetase from Acidobacterium capsulatum (strain ATCC 51196 / DSM 11244 / BCRC 80197 / JCM 7670 / NBRC 15755 / NCIMB 13165 / 161).